The following is a 436-amino-acid chain: Bifunctional protein GlmU (436 aa).

The interval 1-226 is pyrophosphorylase; the sequence is MNEISIIILA…ETNFMGINDK (226 aa). UDP-N-acetyl-alpha-D-glucosamine is bound by residues 9–12, K23, Q75, and 82–83; these read LAAG and GT. A Mg(2+)-binding site is contributed by D105. UDP-N-acetyl-alpha-D-glucosamine-binding residues include G138, E152, N167, and N224. Position 224 (N224) interacts with Mg(2+). The tract at residues 227-247 is linker; sequence FALSIAEEIMQNRIKENLMKN. An N-acetyltransferase region spans residues 248-436; sequence GVIMSLPDTI…YKFFGKNDEK (189 aa). Residues R311 and K328 each coordinate UDP-N-acetyl-alpha-D-glucosamine. The active-site Proton acceptor is H339. Residues Y342 and N353 each coordinate UDP-N-acetyl-alpha-D-glucosamine. Acetyl-CoA contacts are provided by residues 362–363, S381, A399, and R416; that span reads NY.

In the N-terminal section; belongs to the N-acetylglucosamine-1-phosphate uridyltransferase family. It in the C-terminal section; belongs to the transferase hexapeptide repeat family. As to quaternary structure, homotrimer. It depends on Mg(2+) as a cofactor.

It localises to the cytoplasm. The enzyme catalyses alpha-D-glucosamine 1-phosphate + acetyl-CoA = N-acetyl-alpha-D-glucosamine 1-phosphate + CoA + H(+). It catalyses the reaction N-acetyl-alpha-D-glucosamine 1-phosphate + UTP + H(+) = UDP-N-acetyl-alpha-D-glucosamine + diphosphate. It participates in nucleotide-sugar biosynthesis; UDP-N-acetyl-alpha-D-glucosamine biosynthesis; N-acetyl-alpha-D-glucosamine 1-phosphate from alpha-D-glucosamine 6-phosphate (route II): step 2/2. The protein operates within nucleotide-sugar biosynthesis; UDP-N-acetyl-alpha-D-glucosamine biosynthesis; UDP-N-acetyl-alpha-D-glucosamine from N-acetyl-alpha-D-glucosamine 1-phosphate: step 1/1. Its pathway is bacterial outer membrane biogenesis; LPS lipid A biosynthesis. Catalyzes the last two sequential reactions in the de novo biosynthetic pathway for UDP-N-acetylglucosamine (UDP-GlcNAc). The C-terminal domain catalyzes the transfer of acetyl group from acetyl coenzyme A to glucosamine-1-phosphate (GlcN-1-P) to produce N-acetylglucosamine-1-phosphate (GlcNAc-1-P), which is converted into UDP-GlcNAc by the transfer of uridine 5-monophosphate (from uridine 5-triphosphate), a reaction catalyzed by the N-terminal domain. The chain is Bifunctional protein GlmU from Campylobacter fetus subsp. fetus (strain 82-40).